The following is a 24-amino-acid chain: Cytochrome c oxidase subunit 5A-2, mitochondrial (24 aa).

This sequence belongs to the cytochrome c oxidase subunit 5A family. In terms of assembly, component of the cytochrome c oxidase (complex IV, CIV), a multisubunit enzyme composed of 14 subunits. The complex is composed of a catalytic core of 3 subunits MT-CO1, MT-CO2 and MT-CO3, encoded in the mitochondrial DNA, and 11 supernumerary subunits COX4I, COX5A, COX5B, COX6A, COX6B, COX6C, COX7A, COX7B, COX7C, COX8 and NDUFA4, which are encoded in the nuclear genome. The complex exists as a monomer or a dimer and forms supercomplexes (SCs) in the inner mitochondrial membrane with NADH-ubiquinone oxidoreductase (complex I, CI) and ubiquinol-cytochrome c oxidoreductase (cytochrome b-c1 complex, complex III, CIII), resulting in different assemblies (supercomplex SCI(1)III(2)IV(1) and megacomplex MCI(2)III(2)IV(2)).

It is found in the mitochondrion inner membrane. It participates in energy metabolism; oxidative phosphorylation. In terms of biological role, component of the cytochrome c oxidase, the last enzyme in the mitochondrial electron transport chain which drives oxidative phosphorylation. The respiratory chain contains 3 multisubunit complexes succinate dehydrogenase (complex II, CII), ubiquinol-cytochrome c oxidoreductase (cytochrome b-c1 complex, complex III, CIII) and cytochrome c oxidase (complex IV, CIV), that cooperate to transfer electrons derived from NADH and succinate to molecular oxygen, creating an electrochemical gradient over the inner membrane that drives transmembrane transport and the ATP synthase. Cytochrome c oxidase is the component of the respiratory chain that catalyzes the reduction of oxygen to water. Electrons originating from reduced cytochrome c in the intermembrane space (IMS) are transferred via the dinuclear copper A center (CU(A)) of subunit 2 and heme A of subunit 1 to the active site in subunit 1, a binuclear center (BNC) formed by heme A3 and copper B (CU(B)). The BNC reduces molecular oxygen to 2 water molecules using 4 electrons from cytochrome c in the IMS and 4 protons from the mitochondrial matrix. In Thunnus obesus (Bigeye tuna), this protein is Cytochrome c oxidase subunit 5A-2, mitochondrial.